The chain runs to 367 residues: Alanine racemase (367 aa).

Lys-40 serves as the catalytic Proton acceptor; specific for D-alanine. At Lys-40 the chain carries N6-(pyridoxal phosphate)lysine. Arg-136 provides a ligand contact to substrate. The Proton acceptor; specific for L-alanine role is filled by Tyr-263. A substrate-binding site is contributed by Met-310.

Belongs to the alanine racemase family. Requires pyridoxal 5'-phosphate as cofactor.

It carries out the reaction L-alanine = D-alanine. Its pathway is amino-acid biosynthesis; D-alanine biosynthesis; D-alanine from L-alanine: step 1/1. In terms of biological role, catalyzes the interconversion of L-alanine and D-alanine. May also act on other amino acids. The protein is Alanine racemase (alr) of Streptococcus thermophilus (strain CNRZ 1066).